We begin with the raw amino-acid sequence, 78 residues long: Longicornsin (78 aa).

A signal peptide spans 1 to 22 (MAESTTTCFLLLVTGYVTAVMS). A propeptide spanning residues 23-29 (EEAHLRS) is cleaved from the precursor. Cystine bridges form between Cys-35-Cys-58, Cys-43-Cys-63, and Cys-47-Cys-65.

Salivary glands (at protein level).

Its subcellular location is the secreted. Functionally, has antibacterial activity against the Gram-positive bacteria S.aureus ATCC2592 (MIC=0.8 ug/ml), S.aureus 6A (MIC=0.8 ug/ml) and S.aureus 15A (MIC=1.6 ug/ml), and against the Gram-negative bacteria E.coli ATCC 25922 (MIC=3.2 ug/ml), E.coli 23A (MIC=6.4 ug/ml), E.coli 27A (MIC=6.4 ug/ml), P.aeruginosa 3A (MIC=3.2 ug/ml), P.aeruginosa 7A (MIC=0.8 ug/ml) and H.pylori NCTC11637 (MIC=6.4 ug/ml). Has antifungal activity against C.albidus ATCC2002 (MIC=25.6 ug/ml). Very low hemolytic activity against rabbit erythrocytes. In Haemaphysalis longicornis (Bush tick), this protein is Longicornsin.